The following is a 532-amino-acid chain: Deoxyribodipyrimidine photo-lyase (532 aa).

The segment at 1 to 57 (MDSKKRSHSTGGEAENMESQESKAKRKPLQKHQFSKSNVVQKEEKDKTEGEEKGAEG) is disordered. A compositionally biased stretch (basic residues) spans 24–34 (AKRKPLQKHQF). Residues 41-55 (QKEEKDKTEGEEKGA) are compositionally biased toward basic and acidic residues. The region spanning 97–229 (QAFVYWMSRD…QVDAHNIVPC (133 aa)) is the Photolyase/cryptochrome alpha/beta domain. Arg-322 serves as a coordination point for DNA. 2 interaction with DNA regions span residues 368–376 (EAVVRRELA) and 442–443 (GF). 468–470 (YLN) is a binding site for FAD.

This sequence belongs to the DNA photolyase class-2 family. It depends on FAD as a cofactor.

The enzyme catalyses cyclobutadipyrimidine (in DNA) = 2 pyrimidine residues (in DNA).. Functionally, involved in repair of UV radiation-induced DNA damage. Catalyzes the light-dependent monomerization (300-600 nm) of cyclobutyl pyrimidine dimers (in cis-syn configuration), which are formed between adjacent bases on the same DNA strand upon exposure to ultraviolet radiation. The sequence is that of Deoxyribodipyrimidine photo-lyase (PHR) from Potorous tridactylus (Potoroo).